Reading from the N-terminus, the 342-residue chain is Methionyl-tRNA formyltransferase (342 aa).

Ser110–Pro113 is a (6S)-5,6,7,8-tetrahydrofolate binding site.

It belongs to the Fmt family.

The enzyme catalyses L-methionyl-tRNA(fMet) + (6R)-10-formyltetrahydrofolate = N-formyl-L-methionyl-tRNA(fMet) + (6S)-5,6,7,8-tetrahydrofolate + H(+). In terms of biological role, attaches a formyl group to the free amino group of methionyl-tRNA(fMet). The formyl group appears to play a dual role in the initiator identity of N-formylmethionyl-tRNA by promoting its recognition by IF2 and preventing the misappropriation of this tRNA by the elongation apparatus. The polypeptide is Methionyl-tRNA formyltransferase (Synechococcus sp. (strain CC9311)).